The chain runs to 62 residues: EDEVEETLPVAEEGREKSCITWRNSCVHNDKGCCFPWSCVCWSQTVSRNSSRKEKKCQCRLW.

The propeptide occupies 1-15 (EDEVEETLPVAEEGR). 4 disulfides stabilise this stretch: Cys-19/Cys-34, Cys-26/Cys-39, Cys-33/Cys-59, and Cys-41/Cys-57.

The protein belongs to the neurotoxin omega-lctx family. Expressed by the venom gland.

Its subcellular location is the secreted. Its function is as follows. Modulates Cav2.1/CACNA1A voltage-gated calcium channels (P/Q-type currents) in rat cerebellar Purkinje cells and hippocampal CA1-CA3 neurons. At saturating concentrations (&gt;10 nM) decelerates activation kinetics and slightly increases peak amplitude without affecting deactivation kinetics. In vivo, does not cause death when intravenously injected into mice. In rat models, through its activity on Cav2.1/CACNA1A, has an ameliorative effect on memory defects provoked by hyperstimulation of N-methyl-D-aspartate receptors (NMDARs) in the hippocampus. The protein is Omega-lycotoxin-Am1e of Alopecosa marikovskyi (Wolf spider).